The primary structure comprises 276 residues: NADPH-dependent 7-cyano-7-deazaguanine reductase (276 aa).

83-85 (IES) contacts substrate. NADPH is bound at residue 85–86 (SK). C184 (thioimide intermediate) is an active-site residue. The Proton donor role is filled by D191. 223–224 (HE) is a binding site for substrate. 252–253 (RG) lines the NADPH pocket.

This sequence belongs to the GTP cyclohydrolase I family. QueF type 2 subfamily. Homodimer.

It localises to the cytoplasm. The enzyme catalyses 7-aminomethyl-7-carbaguanine + 2 NADP(+) = 7-cyano-7-deazaguanine + 2 NADPH + 3 H(+). It functions in the pathway tRNA modification; tRNA-queuosine biosynthesis. In terms of biological role, catalyzes the NADPH-dependent reduction of 7-cyano-7-deazaguanine (preQ0) to 7-aminomethyl-7-deazaguanine (preQ1). The protein is NADPH-dependent 7-cyano-7-deazaguanine reductase of Pseudomonas fluorescens (strain Pf0-1).